Reading from the N-terminus, the 397-residue chain is Staphyloferrin A transporter (397 aa).

The next 12 membrane-spanning stretches (helical) occupy residues 10-30, 39-59, 67-87, 93-110, 137-157, 162-182, 213-233, 245-265, 271-292, 296-313, 333-353, and 358-378; these read FLLF…VLTT, IVNF…GAIA, LLRI…VLTY, PISV…LSAV, FIIN…LAVY, TFLA…PLHF, IFIT…LLPV, IFGI…LVLP, IGMV…LGVV, IVIM…SQWA, VLSI…LMSI, and FGIV…TMVF.

Belongs to the major facilitator superfamily.

The protein localises to the cell membrane. Involved in staphyloferrin A secretion. The chain is Staphyloferrin A transporter from Staphylococcus aureus (strain NCTC 8325 / PS 47).